The primary structure comprises 100 residues: Large ribosomal subunit protein bL28 (100 aa).

Belongs to the bacterial ribosomal protein bL28 family.

The protein is Large ribosomal subunit protein bL28 of Gluconobacter oxydans (strain 621H) (Gluconobacter suboxydans).